The chain runs to 859 residues: DNA mismatch repair protein MutS (859 aa).

612–619 (GPNMGGKS) contributes to the ATP binding site. Residues 797 to 822 (SKPLAPSATPPSSYAAPSPAAAPAQA) are disordered.

Belongs to the DNA mismatch repair MutS family.

In terms of biological role, this protein is involved in the repair of mismatches in DNA. It is possible that it carries out the mismatch recognition step. This protein has a weak ATPase activity. In Alcanivorax borkumensis (strain ATCC 700651 / DSM 11573 / NCIMB 13689 / SK2), this protein is DNA mismatch repair protein MutS.